Consider the following 267-residue polypeptide: Formamidopyrimidine-DNA glycosylase (267 aa).

Pro-2 (schiff-base intermediate with DNA) is an active-site residue. The active-site Proton donor is Glu-3. Lys-58 acts as the Proton donor; for beta-elimination activity in catalysis. The DNA site is built by His-91, Arg-110, and Arg-152. The FPG-type zinc finger occupies 233–267 (DVYGRGHGTCTSCGGALEAVRLGNRSTVFCPRCQQ). Arg-257 functions as the Proton donor; for delta-elimination activity in the catalytic mechanism.

It belongs to the FPG family. In terms of assembly, monomer. Requires Zn(2+) as cofactor.

It carries out the reaction Hydrolysis of DNA containing ring-opened 7-methylguanine residues, releasing 2,6-diamino-4-hydroxy-5-(N-methyl)formamidopyrimidine.. The enzyme catalyses 2'-deoxyribonucleotide-(2'-deoxyribose 5'-phosphate)-2'-deoxyribonucleotide-DNA = a 3'-end 2'-deoxyribonucleotide-(2,3-dehydro-2,3-deoxyribose 5'-phosphate)-DNA + a 5'-end 5'-phospho-2'-deoxyribonucleoside-DNA + H(+). Its function is as follows. Involved in base excision repair of DNA damaged by oxidation or by mutagenic agents. Acts as a DNA glycosylase that recognizes and removes damaged bases. Has a preference for oxidized purines, such as 7,8-dihydro-8-oxoguanine (8-oxoG). Has AP (apurinic/apyrimidinic) lyase activity and introduces nicks in the DNA strand. Cleaves the DNA backbone by beta-delta elimination to generate a single-strand break at the site of the removed base with both 3'- and 5'-phosphates. The sequence is that of Formamidopyrimidine-DNA glycosylase from Pelobacter propionicus (strain DSM 2379 / NBRC 103807 / OttBd1).